The following is a 179-amino-acid chain: Large ribosomal subunit protein uL6 (179 aa).

Belongs to the universal ribosomal protein uL6 family. In terms of assembly, part of the 50S ribosomal subunit.

In terms of biological role, this protein binds to the 23S rRNA, and is important in its secondary structure. It is located near the subunit interface in the base of the L7/L12 stalk, and near the tRNA binding site of the peptidyltransferase center. The sequence is that of Large ribosomal subunit protein uL6 from Herpetosiphon aurantiacus (strain ATCC 23779 / DSM 785 / 114-95).